Here is a 712-residue protein sequence, read N- to C-terminus: MNPPGSLGVLEEKEEEHLAPPILGPSIHSDNPQERIQARRLRIAARLEARRREALGEYLDGKKESEEDQSKSYKQKEESRLKLAKLLLCGTELVTNIQVAADIREIHRRVEEEEIKRQRLEKLENEVKTSQDKFDEITVKWEEGKQRRIPQELWEMLNAQQVHCAGLIEDKNKLISELQQELKMKDDQYVKDLKKQSDDICLLLERMEEQVKNVMKTFRQELQNIEKAFEVERQELLTSNKKKWERALQAHNAKELEYLMNRIKKVEDYEKQLNKQRIWDCEEYNTIKIKLEQDVQILEQQLQQMKATYQLNQEKLEYNFQVLKKRDEESTVIKSQQKRKINRLHDVLNNLRSKYNKQVKQFQEENQSLTSDYKRLVLQFKELQKAMRHFALIDDKRFREIWLMNEEEAKDLINRAFDVDRIISTHHLGLPWMAPDFWFLKNVGPISQQQQKSATQILEEVLMEAEKEGADEDSSESETYLDLPKQVSARTTRKILMLLCDESGFLIESKLLSLLLPLEKNECYLLRLDAVFSALGIENEDDLYKLVNFFLKYQTHHSPSSQEPLDLRAEKERSLVDGKSQEKEPPPSPKLIHPNDVLKILEAFVMSLRKPRDFWVPVKLLKAVRDDSKDSEYWEALTTVIPATTLNLWDALYTALEKYHLVLTQRAELLIENSSLERQNTELQQLLQQYLDTKINSELQVPPTQVFRVPTK.

Positions 1–34 are disordered; that stretch reads MNPPGSLGVLEEKEEEHLAPPILGPSIHSDNPQE. Residues 100–388 adopt a coiled-coil conformation; that stretch reads AADIREIHRR…QFKELQKAMR (289 aa). The disordered stretch occupies residues 557–591; that stretch reads HSPSSQEPLDLRAEKERSLVDGKSQEKEPPPSPKL. Residues 565–585 show a composition bias toward basic and acidic residues; sequence LDLRAEKERSLVDGKSQEKEP. Positions 663-698 form a coiled coil; sequence LTQRAELLIENSSLERQNTELQQLLQQYLDTKINSE.

The protein belongs to the DRC1 family. Component of the nexin-dynein regulatory complex (N-DRC). Interacts with CCDC65/DRC2, DRC3, GAS8/DRC4 and TCTE1/DRC5.

Its subcellular location is the cytoplasm. It localises to the cytoskeleton. The protein localises to the cilium axoneme. The protein resides in the flagellum axoneme. Component of the nexin-dynein regulatory complex (N-DRC) a key regulator of ciliary/flagellar motility which maintains the alignment and integrity of the distal axoneme and regulates microtubule sliding in motile axonemes. Plays a critical role in the assembly of N-DRC and also stabilizes the assembly of multiple inner dynein arms and radial spokes. Coassembles with CCDC65/DRC2 to form a central scaffold needed for assembly of the N-DRC and its attachment to the outer doublet microtubules. The chain is Dynein regulatory complex protein 1 (DRC1) from Bos taurus (Bovine).